A 258-amino-acid polypeptide reads, in one-letter code: Acyl-[acyl-carrier-protein]--UDP-N-acetylglucosamine O-acyltransferase (258 aa).

It belongs to the transferase hexapeptide repeat family. LpxA subfamily. Homotrimer.

Its subcellular location is the cytoplasm. The catalysed reaction is a (3R)-hydroxyacyl-[ACP] + UDP-N-acetyl-alpha-D-glucosamine = a UDP-3-O-[(3R)-3-hydroxyacyl]-N-acetyl-alpha-D-glucosamine + holo-[ACP]. It participates in glycolipid biosynthesis; lipid IV(A) biosynthesis; lipid IV(A) from (3R)-3-hydroxytetradecanoyl-[acyl-carrier-protein] and UDP-N-acetyl-alpha-D-glucosamine: step 1/6. Its function is as follows. Involved in the biosynthesis of lipid A, a phosphorylated glycolipid that anchors the lipopolysaccharide to the outer membrane of the cell. The chain is Acyl-[acyl-carrier-protein]--UDP-N-acetylglucosamine O-acyltransferase from Saccharophagus degradans (strain 2-40 / ATCC 43961 / DSM 17024).